We begin with the raw amino-acid sequence, 298 residues long: Mitochondrial 2-oxodicarboxylate carrier (298 aa).

3 Solcar repeats span residues 10–99, 106–195, and 204–293; these read HETC…YKKF, SPGL…VKDN, and LEFL…TYAW. The next 6 membrane-spanning stretches (helical) occupy residues 16 to 36, 69 to 88, 112 to 132, 166 to 186, 204 to 224, and 276 to 296; these read VAAGGCAGLVEICLMHPLDVV, FGFYKGIIPPILAETPKRAV, PIAGLGSGLTEAVVVNPFEVV, GLNKGFTATLGRHGIFNMTYF, LEFLRKFGIGFVSGTVGSVFN, and LGPGGGVMLLVYEYTYAWLQE.

It belongs to the mitochondrial carrier (TC 2.A.29) family. In terms of tissue distribution, widely expressed.

It localises to the mitochondrion inner membrane. The enzyme catalyses 2-oxoadipate(in) + 2-oxoglutarate(out) = 2-oxoadipate(out) + 2-oxoglutarate(in). The catalysed reaction is hexanedioate(in) + 2-oxoglutarate(out) = hexanedioate(out) + 2-oxoglutarate(in). It carries out the reaction L-2-aminoadipate(in) + 2-oxoglutarate(out) = L-2-aminoadipate(out) + 2-oxoglutarate(in). It catalyses the reaction glutarate(in) + 2-oxoglutarate(out) = glutarate(out) + 2-oxoglutarate(in). The enzyme catalyses 2-oxoheptanedioate(in) + 2-oxoglutarate(out) = 2-oxoheptanedioate(out) + 2-oxoglutarate(in). The catalysed reaction is heptanedioate(in) + 2-oxoglutarate(out) = heptanedioate(out) + 2-oxoglutarate(in). It carries out the reaction citrate(in) + 2-oxoglutarate(out) = citrate(out) + 2-oxoglutarate(in). Its function is as follows. Transports dicarboxylates across the inner membranes of mitochondria by a counter-exchange mechanism. Can transport 2-oxoadipate (2-oxohexanedioate), 2-oxoglutarate, adipate (hexanedioate), glutarate, and to a lesser extent, pimelate (heptanedioate), 2-oxopimelate (2-oxoheptanedioate), 2-aminoadipate (2-aminohexanedioate), oxaloacetate, and citrate. Plays a central role in catabolism of lysine, hydroxylysine, and tryptophan, by transporting common metabolite intermediates (such as 2-oxoadipate) into the mitochondria, where it is converted into acetyl-CoA and can enter the citric acid (TCA) cycle. The sequence is that of Mitochondrial 2-oxodicarboxylate carrier (Slc25a21) from Rattus norvegicus (Rat).